The following is a 322-amino-acid chain: Dirigent protein 9 (322 aa).

An N-terminal signal peptide occupies residues 1-20; it reads MAKALHITIFLFLISSNLLA.

The protein belongs to the plant dirigent protein family. In terms of assembly, homodimer.

The protein localises to the secreted. The protein resides in the extracellular space. It is found in the apoplast. Functionally, dirigent proteins impart stereoselectivity on the phenoxy radical-coupling reaction, yielding optically active lignans from two molecules of coniferyl alcohol in the biosynthesis of lignans, flavonolignans, and alkaloids and thus plays a central role in plant secondary metabolism. The polypeptide is Dirigent protein 9 (DIR9) (Arabidopsis thaliana (Mouse-ear cress)).